The sequence spans 289 residues: SNF1-related protein kinase regulatory subunit beta-2 (289 aa).

Basic and acidic residues predominate over residues 1–10 (MGNVNAREEA). The segment at 1-59 (MGNVNAREEANSNNASAVEDEDAEICSREAMSAASDGNHVAPPELMGQSPPHSPRATQS) is disordered. G2 carries N-myristoyl glycine lipidation. Residues 103–180 (PTMITWCHGG…AGNTFNILDL (78 aa)) form a kinase-interacting sequence (KIS) region. An association with SNF1 complex (ASC) region spans residues 217-289 (EPPVVPPHLQ…TVVLYKSLQR (73 aa)).

Belongs to the 5'-AMP-activated protein kinase beta subunit family. In terms of assembly, subunit of a probable heterotrimeric complex consisting of an alpha catalytic (KIN10 or KIN11) subunit, and a beta (KINB) and a gamma (KING or SNF4) non-catalytic regulatory subunits. Interacts with SNF4. Interacts with FLZ1, FLZ2, FLZ8, FLZ9, FLZ10, FLZ12, FLZ13 and FLZ14. Sumoylated. In terms of tissue distribution, expressed in leaves, stems, roots, flower buds and flowers. Not detectable in siliques.

The protein resides in the cell membrane. Functionally, regulatory subunit of the probable trimeric SNF1-related protein kinase (SnRK) complex, which may play a role in a signal transduction cascade regulating gene expression and carbohydrate metabolism in higher plants. The SnRK complex may also be involved in the regulation of fatty acid synthesis by phosphorylation of acetyl-CoA carboxylase and in assimilation of nitrogen by phosphorylating nitrate reductase. This Arabidopsis thaliana (Mouse-ear cress) protein is SNF1-related protein kinase regulatory subunit beta-2 (KINB2).